The sequence spans 61 residues: Photosystem II reaction center protein K (61 aa).

Positions 1 to 24 (MLNTFSLIGICLNSTLFSSSFFFG) are excised as a propeptide. A helical membrane pass occupies residues 36–56 (IVDIMPVIPLFFFLLAFVWQA).

The protein belongs to the PsbK family. PSII is composed of 1 copy each of membrane proteins PsbA, PsbB, PsbC, PsbD, PsbE, PsbF, PsbH, PsbI, PsbJ, PsbK, PsbL, PsbM, PsbT, PsbX, PsbY, PsbZ, Psb30/Ycf12, at least 3 peripheral proteins of the oxygen-evolving complex and a large number of cofactors. It forms dimeric complexes.

It localises to the plastid. It is found in the chloroplast thylakoid membrane. Functionally, one of the components of the core complex of photosystem II (PSII). PSII is a light-driven water:plastoquinone oxidoreductase that uses light energy to abstract electrons from H(2)O, generating O(2) and a proton gradient subsequently used for ATP formation. It consists of a core antenna complex that captures photons, and an electron transfer chain that converts photonic excitation into a charge separation. This Nicotiana tomentosiformis (Tobacco) protein is Photosystem II reaction center protein K.